We begin with the raw amino-acid sequence, 346 residues long: [LysW]-lysine/[LysW]-ornithine hydrolase (346 aa).

Position 68 (histidine 68) interacts with Zn(2+). Aspartate 70 is a catalytic residue. Aspartate 92 is a binding site for Zn(2+). Glutamate 122 serves as the catalytic Proton acceptor. Zn(2+) contacts are provided by glutamate 123, glutamate 146, and histidine 317.

Belongs to the peptidase M20A family. LysK subfamily. Zn(2+) serves as cofactor. Co(2+) is required as a cofactor.

The protein resides in the cytoplasm. The enzyme catalyses [amino-group carrier protein]-C-terminal-gamma-(L-lysyl)-L-glutamate + H2O = [amino-group carrier protein]-C-terminal-L-glutamate + L-lysine. It carries out the reaction [amino-group carrier protein]-C-terminal-gamma-(L-ornithyl)-L-glutamate + H2O = [amino-group carrier protein]-C-terminal-L-glutamate + L-ornithine. It participates in amino-acid biosynthesis; L-lysine biosynthesis via AAA pathway; L-lysine from L-alpha-aminoadipate (Thermus route): step 5/5. The protein operates within amino-acid biosynthesis; L-arginine biosynthesis. Catalyzes the release of L-lysine from [LysW]-gamma-L-lysine and the release of L-ornithine from [LysW]-L-ornithine. The chain is [LysW]-lysine/[LysW]-ornithine hydrolase from Saccharolobus islandicus (strain Y.G.57.14 / Yellowstone #1) (Sulfolobus islandicus).